We begin with the raw amino-acid sequence, 95 residues long: FXYD domain-containing ion transport regulator 6 (95 aa).

Positions 1 to 18 are cleaved as a signal peptide; sequence MELVLVFLCSLLAPMVLA. The Extracellular portion of the chain corresponds to 19-35; that stretch reads STAEKEKEMDPFHYDYQ. The helical transmembrane segment at 36-58 threads the bilayer; the sequence is TLRIGGLVFAVVLFSVGILLILS. The Cytoplasmic segment spans residues 59–95; sequence RRCKCSFNQKPRAPGDEEAQVENLITANATEPQKAEN.

This sequence belongs to the FXYD family. Regulatory subunit of the sodium/potassium-transporting ATPase which is composed of a catalytic alpha subunit, a non-catalytic beta subunit and an additional regulatory subunit. The regulatory subunit, a member of the FXYD protein family, modulates the enzymatic activity in a tissue- and isoform-specific way by changing affinities of the Na+/K+-ATPase toward Na(+), K(+) or ATP.

The protein resides in the cell membrane. Associates with and regulates the activity of the sodium/potassium-transporting ATPase (NKA) which catalyzes the hydrolysis of ATP coupled with the exchange of Na(+) and K(+) ions across the plasma membrane. Reduces the apparent affinity for intracellular Na(+) with no change in the apparent affinity for extracellular K(+). In addition to modulating NKA kinetics, may also function as a regulator of NKA localization to the plasma membrane. In Macaca fascicularis (Crab-eating macaque), this protein is FXYD domain-containing ion transport regulator 6 (FXYD6).